We begin with the raw amino-acid sequence, 234 residues long: Nitroreductase NfnB (234 aa).

Residue arginine 25–arginine 29 participates in FMN binding. Residues serine 55, arginine 105, tyrosine 113, and isoleucine 118 each coordinate NADP(+). FMN-binding positions include tyrosine 137, alanine 181–leucine 182, and arginine 223.

It belongs to the nitroreductase family. Homodimer. FMN is required as a cofactor.

Its function is as follows. Confers resistance to antitubercular drugs benzothiazinone (BTZ) and dinitrobenzamide (DNB). Inactivates BTZ and DNB by reducing an essential nitro group of these compounds to amino group or to hydroxyl amine, respectively, using NADH or NADPH as source of reducing equivalents; two electrons are transferred. Able to reduce the nitro group of bicyclic nitroimidazole PA-824, but not of quinone menadione, nitrofurazone, methyl-4-nitrobenzoate, 4-nitrobenzene methyl sulfonate or 4-nitroacetophenone. This Mycolicibacterium smegmatis (strain ATCC 700084 / mc(2)155) (Mycobacterium smegmatis) protein is Nitroreductase NfnB.